A 297-amino-acid polypeptide reads, in one-letter code: Ribosomal RNA small subunit methyltransferase A (297 aa).

Residues Asn-28, Leu-30, Gly-55, Glu-76, Asp-101, and Asn-126 each contribute to the S-adenosyl-L-methionine site.

The protein belongs to the class I-like SAM-binding methyltransferase superfamily. rRNA adenine N(6)-methyltransferase family. RsmA subfamily.

It localises to the cytoplasm. It catalyses the reaction adenosine(1518)/adenosine(1519) in 16S rRNA + 4 S-adenosyl-L-methionine = N(6)-dimethyladenosine(1518)/N(6)-dimethyladenosine(1519) in 16S rRNA + 4 S-adenosyl-L-homocysteine + 4 H(+). In terms of biological role, specifically dimethylates two adjacent adenosines (A1518 and A1519) in the loop of a conserved hairpin near the 3'-end of 16S rRNA in the 30S particle. May play a critical role in biogenesis of 30S subunits. In Latilactobacillus sakei subsp. sakei (strain 23K) (Lactobacillus sakei subsp. sakei), this protein is Ribosomal RNA small subunit methyltransferase A.